The primary structure comprises 337 residues: Thiazole synthase (337 aa).

A disordered region spans residues 1-41; it reads MSQHPLRPAGSRPGDSPPDGSCPDGLAGGGSAVGGGGGGEA. Residues 10 to 25 show a composition bias toward low complexity; sequence GSRPGDSPPDGSCPDG. Positions 26–41 are enriched in gly residues; the sequence is LAGGGSAVGGGGGGEA. The active-site Schiff-base intermediate with DXP is lysine 144. Residues glycine 205, 231–232, and 253–254 each bind 1-deoxy-D-xylulose 5-phosphate; these read AG and NT. Positions 302-337 are disordered; that stretch reads FLGAHPSPASHPSPASPVPSVSRATSPAAVVGEASR. Low complexity predominate over residues 319 to 337; the sequence is VPSVSRATSPAAVVGEASR.

It belongs to the ThiG family. As to quaternary structure, homotetramer. Forms heterodimers with either ThiH or ThiS.

Its subcellular location is the cytoplasm. It catalyses the reaction [ThiS sulfur-carrier protein]-C-terminal-Gly-aminoethanethioate + 2-iminoacetate + 1-deoxy-D-xylulose 5-phosphate = [ThiS sulfur-carrier protein]-C-terminal Gly-Gly + 2-[(2R,5Z)-2-carboxy-4-methylthiazol-5(2H)-ylidene]ethyl phosphate + 2 H2O + H(+). The protein operates within cofactor biosynthesis; thiamine diphosphate biosynthesis. Functionally, catalyzes the rearrangement of 1-deoxy-D-xylulose 5-phosphate (DXP) to produce the thiazole phosphate moiety of thiamine. Sulfur is provided by the thiocarboxylate moiety of the carrier protein ThiS. In vitro, sulfur can be provided by H(2)S. This chain is Thiazole synthase, found in Frankia casuarinae (strain DSM 45818 / CECT 9043 / HFP020203 / CcI3).